Reading from the N-terminus, the 532-residue chain is uncharacterized protein (532 aa).

The next 5 helical transmembrane spans lie at 11–31 (YLSHGLVIHMIINGIVLALII), 51–71 (IEPFVLLVLMELISGIQKIFF), 126–146 (LIDILTYQSSHLFAFIGYTLW), 147–167 (ILYNSPITLTIYILLIPIIVF), and 231–253 (YVESINLAITLLTRFNLLIVLLI). Residues 315–531 (ICINKLVYEY…MIIPMNNGII (217 aa)) enclose the ABC transporter domain. 349–356 (GKSGSGKS) provides a ligand contact to ATP.

It localises to the membrane. This is an uncharacterized protein from Acanthamoeba polyphaga mimivirus (APMV).